The chain runs to 245 residues: 1-(5-phosphoribosyl)-5-[(5-phosphoribosylamino)methylideneamino] imidazole-4-carboxamide isomerase (245 aa).

The active-site Proton acceptor is D7. D129 serves as the catalytic Proton donor.

The protein belongs to the HisA/HisF family.

Its subcellular location is the cytoplasm. It catalyses the reaction 1-(5-phospho-beta-D-ribosyl)-5-[(5-phospho-beta-D-ribosylamino)methylideneamino]imidazole-4-carboxamide = 5-[(5-phospho-1-deoxy-D-ribulos-1-ylimino)methylamino]-1-(5-phospho-beta-D-ribosyl)imidazole-4-carboxamide. It participates in amino-acid biosynthesis; L-histidine biosynthesis; L-histidine from 5-phospho-alpha-D-ribose 1-diphosphate: step 4/9. This Vibrio vulnificus (strain CMCP6) protein is 1-(5-phosphoribosyl)-5-[(5-phosphoribosylamino)methylideneamino] imidazole-4-carboxamide isomerase.